Consider the following 270-residue polypeptide: Meiotic recombination 1 protein (270 aa).

The 35-residue stretch at 191–225 (EIKLNKTQITFLIGAKGTRIESLREKSGASIKIIP) folds into the KH domain.

Functionally, required for chromosome pairing and genetic recombination. MER1 may function to bring the axial elements of the synaptonemal complex corresponding to homologous chromosomes together by initiating recombination. MER1 might be responsible for regulating the MER2 gene and/or gene product. The protein is Meiotic recombination 1 protein (MER1) of Saccharomyces cerevisiae (strain ATCC 204508 / S288c) (Baker's yeast).